The primary structure comprises 227 residues: MQAKIVALSAIAAVVNADLRLNTNGIPSDCNAICRPIRDLGNICTVNFIPGQTNNNSDQLQDELDAQCVCTNSSFDVKNLAAQCSSCMSQKVPSDQQRSLEGINSIMSQCGFQATSYASSATSSANTIIVLATRLTASSQLTTTIGGGATPAPTSERSRTSDQARTTTFLTSNGGGFPSIATSTIGGGRETGSPNAAAGVVAPGSNSVLGAAGLAVAGAFALGAFML.

Asn-55 and Asn-72 each carry an N-linked (GlcNAc...) asparagine glycan. A disordered region spans residues Thr-143 to Asp-162.

The protein resides in the secreted. It localises to the cell wall. The sequence is that of Protein CAP22 (CAP22) from Colletotrichum gloeosporioides (Anthracnose fungus).